Consider the following 761-residue polypeptide: MSVQKMMWVPRKMVGGRIPFFTCSKVFSGFSRRSFHESPLARSTYEEEKVLVDEIKQKLTPDDIGRCNKLRNIGISAHIDSGKTTFTERVLYYTKRIKAIHEVRGRDNVGAKMDSMDLEREKGITIQSAATYCSWDKEGKNYHFNLIDTPGHIDFTIEVERALRVLDGAVLVVCAVSGVQSQTVTVDRQMRRYNVPRVTFINKMDRMGSDPFRAIEQLNSKLKIPAAAVQIPIGSESSLSGVVDLINRVAIYNKGDNGEIIEKGPVPENLKPLMEEKRQLLIETLADVDDEMAEMFLEEKEPTTQQIKDAIRRSTIARSFTPVLMGSALANTGIQPVLDAIVDYLPNPSEVLNTALDVSNNEAKVNLVPAVQQPFVGLAFKLEEGKYGQLTYVRVYQGRLRKGNYITNVKTGKKVKVARLVRMHSSEMEDVDEVGSGEICATFGIDCASGDTFTDGSVQYSMSSMYVPDAVVSLSITPNSKDASNFSKALNRFQKEDPTFRVKFDPESKETIISGMGELHLEIYVERMRREYNVDCVTGKPQVSYRESITIPADFDYTHKKQSGGAGQYGRVIGTLSPVDDITKGNIFETAIVGGRIPDKYLAACGKGFEEVCEKGPLIGHRVLDVKMLINDGAIHAVDSNELSFKTATMSAFRDAFLRAQPVIMEPIMNVSVTSPNEFQGNVIGLLNKLQAVIQDTENGHDEFTLKAECALSTMFGFATSLRASTQGKGEFSLEFSHYAPTAPHVQKELISEFQKKQAKK.

The N-terminal 42 residues, M1 to R42, are a transit peptide targeting the mitochondrion. Residues N68–S349 enclose the tr-type G domain. Residues A77–T84, D148–H152, and N202–D205 each bind GTP.

It belongs to the TRAFAC class translation factor GTPase superfamily. Classic translation factor GTPase family. EF-G/EF-2 subfamily. Post-translationally, the precursor is processed in two steps involving mitochondrial intermediate peptidase (MIP) and mitochondrial processing peptidase (MPP).

The protein resides in the mitochondrion. The protein operates within protein biosynthesis; polypeptide chain elongation. Mitochondrial GTPase that catalyzes the GTP-dependent ribosomal translocation step during translation elongation. During this step, the ribosome changes from the pre-translocational (PRE) to the post-translocational (POST) state as the newly formed A-site-bound peptidyl-tRNA and P-site-bound deacylated tRNA move to the P and E sites, respectively. Catalyzes the coordinated movement of the two tRNA molecules, the mRNA and conformational changes in the ribosome. The protein is Elongation factor G, mitochondrial of Saccharomyces cerevisiae (strain ATCC 204508 / S288c) (Baker's yeast).